The chain runs to 119 residues: Ribonuclease P protein component (119 aa).

Belongs to the RnpA family. As to quaternary structure, consists of a catalytic RNA component (M1 or rnpB) and a protein subunit.

The catalysed reaction is Endonucleolytic cleavage of RNA, removing 5'-extranucleotides from tRNA precursor.. RNaseP catalyzes the removal of the 5'-leader sequence from pre-tRNA to produce the mature 5'-terminus. It can also cleave other RNA substrates such as 4.5S RNA. The protein component plays an auxiliary but essential role in vivo by binding to the 5'-leader sequence and broadening the substrate specificity of the ribozyme. The chain is Ribonuclease P protein component from Yersinia pseudotuberculosis serotype O:1b (strain IP 31758).